Here is a 139-residue protein sequence, read N- to C-terminus: GATA transcription factor 16 (139 aa).

The segment at 32–86 (NDKKKTCADCGTSKTPLWRGGPVGPKSLCNACGIRNRKKRRGGTEDNKKLKKSSS) adopts a GATA-type zinc-finger fold. A disordered region spans residues 67–98 (NRKKRRGGTEDNKKLKKSSSGGGNRKFGESLK).

It belongs to the type IV zinc-finger family. Class B subfamily.

The protein localises to the nucleus. Functionally, transcriptional regulator that specifically binds 5'-GATA-3' or 5'-GAT-3' motifs within gene promoters. The polypeptide is GATA transcription factor 16 (GATA16) (Arabidopsis thaliana (Mouse-ear cress)).